A 426-amino-acid chain; its full sequence is Inositol hexakisphosphate kinase 2 (426 aa).

ATP is bound by residues 207-209 (ENL) and aspartate 220. Substrate contacts are provided by residues lysine 222 and 236 to 243 (KAANQIRK). Residue aspartate 383 participates in ATP binding. Histidine 386 is a binding site for substrate.

The protein belongs to the inositol phosphokinase (IPK) family.

It localises to the nucleus. The catalysed reaction is 1D-myo-inositol hexakisphosphate + ATP = 5-diphospho-1D-myo-inositol 1,2,3,4,6-pentakisphosphate + ADP. It functions in the pathway phospholipid metabolism; phosphatidylinositol metabolism. With respect to regulation, inhibited by flavonoids, including myricetin, quercetin, luteolin, isorhamnetin, rhamnetin, kaempferol, diosmetin and apigenin. Converts inositol hexakisphosphate (InsP6) to diphosphoinositol pentakisphosphate (InsP7/PP-InsP5). In Homo sapiens (Human), this protein is Inositol hexakisphosphate kinase 2.